Here is a 941-residue protein sequence, read N- to C-terminus: RNA-directed RNA polymerase (941 aa).

Residues 875–918 (SARQGGMGLPPPPPPPLGGGGMAGPPPPPFMGLRPESSVPTSVP) are disordered. Over residues 905–918 (MGLRPESSVPTSVP) the composition is skewed to low complexity.

Forms a ribonucleoprotein complex with the 23S RNA, where a single polymerase molecule binds to a single viral RNA genome. Since the viral RNA is not encapsidated, ribonucleoprotein complex formation appears to be the strategy to survive in the host as persistent virus.

The protein localises to the host cytoplasm. The catalysed reaction is RNA(n) + a ribonucleoside 5'-triphosphate = RNA(n+1) + diphosphate. RNA-directed RNA polymerase that replicates the viral (+) and (-) genome. This chain is RNA-directed RNA polymerase, found in Saccharomyces 23S RNA narnavirus (ScNV-23S).